The chain runs to 185 residues: Elongation factor P (185 aa).

This sequence belongs to the elongation factor P family.

Its subcellular location is the cytoplasm. It functions in the pathway protein biosynthesis; polypeptide chain elongation. In terms of biological role, involved in peptide bond synthesis. Stimulates efficient translation and peptide-bond synthesis on native or reconstituted 70S ribosomes in vitro. Probably functions indirectly by altering the affinity of the ribosome for aminoacyl-tRNA, thus increasing their reactivity as acceptors for peptidyl transferase. The polypeptide is Elongation factor P (Mesomycoplasma hyopneumoniae (strain 7448) (Mycoplasma hyopneumoniae)).